The primary structure comprises 344 residues: Methionine import ATP-binding protein MetN (344 aa).

One can recognise an ABC transporter domain in the interval 7 to 245; sequence ISLKKISRCF…PQDDTTIAML (239 aa). 42-49 is a binding site for ATP; that stretch reads GRSGAGKS.

It belongs to the ABC transporter superfamily. Methionine importer (TC 3.A.1.24) family. As to quaternary structure, the complex is composed of two ATP-binding proteins (MetN), two transmembrane proteins (MetI) and a solute-binding protein (MetQ).

It localises to the cell inner membrane. The enzyme catalyses L-methionine(out) + ATP + H2O = L-methionine(in) + ADP + phosphate + H(+). It carries out the reaction D-methionine(out) + ATP + H2O = D-methionine(in) + ADP + phosphate + H(+). In terms of biological role, part of the ABC transporter complex MetNIQ involved in methionine import. Responsible for energy coupling to the transport system. In Bartonella henselae (strain ATCC 49882 / DSM 28221 / CCUG 30454 / Houston 1) (Rochalimaea henselae), this protein is Methionine import ATP-binding protein MetN.